Here is a 440-residue protein sequence, read N- to C-terminus: UPF0489 protein C5orf22 homolog (440 aa).

The interval 187 to 207 is disordered; sequence VEGSSSGIQSSTSESSEDGLM. Residues 188–200 show a composition bias toward low complexity; the sequence is EGSSSGIQSSTSE.

It belongs to the UPF0489 family.

The polypeptide is UPF0489 protein C5orf22 homolog (Xenopus tropicalis (Western clawed frog)).